Consider the following 385-residue polypeptide: Arginine biosynthesis bifunctional protein ArgJ (385 aa).

Substrate contacts are provided by Thr142, Lys168, Thr179, Glu259, Asn380, and Thr385. Thr179 functions as the Nucleophile in the catalytic mechanism.

Belongs to the ArgJ family. Heterotetramer of two alpha and two beta chains.

The protein localises to the cytoplasm. It catalyses the reaction N(2)-acetyl-L-ornithine + L-glutamate = N-acetyl-L-glutamate + L-ornithine. The enzyme catalyses L-glutamate + acetyl-CoA = N-acetyl-L-glutamate + CoA + H(+). It participates in amino-acid biosynthesis; L-arginine biosynthesis; L-ornithine and N-acetyl-L-glutamate from L-glutamate and N(2)-acetyl-L-ornithine (cyclic): step 1/1. The protein operates within amino-acid biosynthesis; L-arginine biosynthesis; N(2)-acetyl-L-ornithine from L-glutamate: step 1/4. Functionally, catalyzes two activities which are involved in the cyclic version of arginine biosynthesis: the synthesis of N-acetylglutamate from glutamate and acetyl-CoA as the acetyl donor, and of ornithine by transacetylation between N(2)-acetylornithine and glutamate. The sequence is that of Arginine biosynthesis bifunctional protein ArgJ from Leptospira interrogans serogroup Icterohaemorrhagiae serovar Lai (strain 56601).